Reading from the N-terminus, the 239-residue chain is tRNA (guanine-N(7)-)-methyltransferase (239 aa).

S-adenosyl-L-methionine contacts are provided by E68, E93, D120, and D143. D143 is a catalytic residue. Substrate is bound by residues K147, D180, and 217–220 (TKFE).

This sequence belongs to the class I-like SAM-binding methyltransferase superfamily. TrmB family.

It catalyses the reaction guanosine(46) in tRNA + S-adenosyl-L-methionine = N(7)-methylguanosine(46) in tRNA + S-adenosyl-L-homocysteine. The protein operates within tRNA modification; N(7)-methylguanine-tRNA biosynthesis. Catalyzes the formation of N(7)-methylguanine at position 46 (m7G46) in tRNA. The protein is tRNA (guanine-N(7)-)-methyltransferase of Vibrio parahaemolyticus serotype O3:K6 (strain RIMD 2210633).